The primary structure comprises 686 residues: Hexamerin 70c (686 aa).

An N-terminal signal peptide occupies residues 1–19 (MLSKVVLLVALAAICGAQG). Positions 32–155 (FLHKQKKIFD…IAVLYRPDTK (124 aa)) constitute a Hemocyanin N-terminal domain. Residues 161-431 (AIYEIYPNYF…MLYQNILSYF (271 aa)) enclose the Hemocyanin middle domain. N-linked (GlcNAc...) asparagine glycosylation is found at Asn-205 and Asn-662. In terms of domain architecture, Hemocyanin C-terminal spans 440–676 (QYSQSELQMP…NMYFKDVFIY (237 aa)).

Belongs to the hemocyanin/hexamerin family. In terms of assembly, probable homohexamer. As to expression, expressed in the fat body and secreted into the hemolymph (at protein level). Present in trophocytes and oenocytes of the fat body (at protein level). Not expressed in ovary or testis.

The protein resides in the secreted. The protein localises to the nucleus. It localises to the cytoplasm. It is found in the cytoplasmic granule. Functionally, storage protein that may function as a nutrient supply to compensate for lack of dietary proteins during metamorphosis and egg production. This chain is Hexamerin 70c, found in Apis mellifera (Honeybee).